The primary structure comprises 1495 residues: Collagen alpha-1(XVII) chain (1495 aa).

The span at 1-17 shows a compositional bias: basic and acidic residues; that stretch reads MDSVTKKTRQDGSEVTE. The disordered stretch occupies residues 1 to 138; it reads MDSVTKKTRQ…VRLQSASPSG (138 aa). The Cytoplasmic portion of the chain corresponds to 1–435; sequence MDSVTKKTRQ…CGSCCSWWKW (435 aa). The nonhelical region (NC16) stretch occupies residues 1–535; that stretch reads MDSVTKKTRQ…IERGYFRGER (535 aa). A compositionally biased stretch (polar residues) spans 19–32; it reads QGGSSSGLKTSSHT. Residues 51–63 are compositionally biased toward low complexity; sequence SSGSGRLNSSSSG. Composition is skewed to polar residues over residues 64–80 and 95–104; these read YRQT…SPGS and EGSSSANSSP. The helical; Signal-anchor for type II membrane protein transmembrane segment at 436–456 threads the bilayer; the sequence is LLGLLLAWLLLLGLLFGLIAL. Residues 457-1495 lie on the Extracellular side of the membrane; sequence AEEVRKLKSR…GRRRRRSVGV (1039 aa). Disordered regions lie at residues 532 to 824, 847 to 999, 1160 to 1185, 1201 to 1226, 1251 to 1278, 1295 to 1336, and 1396 to 1416; these read RGER…EKGS, DLQG…SSSQ, EFSG…SSGI, SISG…TGLL, RSYI…LVAG, GGSI…GSYG, and MSYT…PGIS. The tract at residues 536–1482 is triple-helical region; sequence GEPGMKGDMG…KGEKGEKGEQ (947 aa). Composition is skewed to low complexity over residues 702–711 and 761–773; these read PGAKGPAGQA and RPGA…APGK. The span at 786 to 807 shows a compositional bias: pro residues; it reads PGPPGPPGPIGPTGPPGVPGPV. Residues 809–818 are compositionally biased toward low complexity; it reads PAGLPGQQGP. 7 stretches are compositionally biased toward pro residues: residues 871–886, 901–910, 946–955, 981–993, 1167–1179, 1208–1218, and 1257–1269; these read PRGP…PPGR, PPGPPGPPGP, PPGP…PPGP, PPGP…PPGI, and PPGPPGPPGPP. Residues 1296–1308 show a composition bias toward gly residues; that stretch reads GSIGAEGSHGGSL. Residues 1309 to 1336 show a composition bias toward low complexity; it reads GASSSYGSSMSSSMSSYSASMGSDGSYG. Pro residues predominate over residues 1403–1413; sequence PPGPPGPPGPP. Asn1424 carries N-linked (GlcNAc...) asparagine glycosylation. The interval 1435–1495 is disordered; sequence THGTVRGPPG…GRRRRRSVGV (61 aa). Residues 1472 to 1481 show a composition bias toward basic and acidic residues; the sequence is PKGEKGEKGE. A nonhelical region (NC1) region spans residues 1483 to 1495; that stretch reads MYSGRRRRRSVGV. A compositionally biased stretch (basic residues) spans 1486-1495; it reads GRRRRRSVGV.

In terms of assembly, homotrimers of alpha 1(XVII)chains. The intracellular/endo domain is disulfide-linked. In terms of processing, prolines at the third position of the tripeptide repeating unit (G-X-Y) are hydroxylated in some or all of the chains. Post-translationally, the ectodomain is shedded from the surface of keratinocytes resulting in a 120-kDa soluble form, also named as 120 kDa linear IgA disease antigen homolog. The shedding is mediated by membrane-bound metalloproteases. As to expression, cornea specific.

The protein localises to the cell junction. It is found in the hemidesmosome. It localises to the membrane. The protein resides in the secreted. Its subcellular location is the extracellular space. The protein localises to the extracellular matrix. It is found in the basement membrane. May play a role in the integrity of hemidesmosome and the attachment of basal keratinocytes to the underlying basement membrane. Its function is as follows. The 120 kDa linear IgA disease antigen homolog is an anchoring filament component involved in dermal-epidermal cohesion. This chain is Collagen alpha-1(XVII) chain (COL17A1), found in Gallus gallus (Chicken).